We begin with the raw amino-acid sequence, 74 residues long: Anaphase-promoting complex subunit 13 (74 aa).

It belongs to the APC13 family. In terms of assembly, the APC/C is composed of at least 12 subunits.

It localises to the nucleus. It participates in protein modification; protein ubiquitination. In terms of biological role, component of the anaphase promoting complex/cyclosome (APC/C), a cell cycle-regulated E3 ubiquitin ligase that controls progression through mitosis and the G1 phase of the cell cycle. The APC/C complex acts by mediating ubiquitination and subsequent degradation of target proteins: it mainly mediates the formation of 'Lys-11'-linked polyubiquitin chains and, to a lower extent, the formation of 'Lys-48'- and 'Lys-63'-linked polyubiquitin chains. The APC/C complex catalyzes assembly of branched 'Lys-11'-/'Lys-48'-linked branched ubiquitin chains on target proteins. The sequence is that of Anaphase-promoting complex subunit 13 (anapc13) from Xenopus tropicalis (Western clawed frog).